The following is a 485-amino-acid chain: Acyl transferase 1 (485 aa).

Residue His-172 is the Proton acceptor of the active site.

The protein belongs to the plant acyltransferase family. In terms of tissue distribution, highly expressed in young panicles. Expressed in leaf sheaths and panicles.

Functionally, involved in defense against pathogens. May contribute to disease resistance by potentiating disease resistance signaling, or producing phytoalexin-like secondary products. The protein is Acyl transferase 1 of Oryza sativa subsp. japonica (Rice).